The primary structure comprises 273 residues: Thiazole synthase (273 aa).

Catalysis depends on K110, which acts as the Schiff-base intermediate with DXP. Residues G171, A197–G198, and N219–T220 contribute to the 1-deoxy-D-xylulose 5-phosphate site. Residues M251–P273 form a disordered region.

The protein belongs to the ThiG family. Homotetramer. Forms heterodimers with either ThiH or ThiS.

It is found in the cytoplasm. The catalysed reaction is [ThiS sulfur-carrier protein]-C-terminal-Gly-aminoethanethioate + 2-iminoacetate + 1-deoxy-D-xylulose 5-phosphate = [ThiS sulfur-carrier protein]-C-terminal Gly-Gly + 2-[(2R,5Z)-2-carboxy-4-methylthiazol-5(2H)-ylidene]ethyl phosphate + 2 H2O + H(+). The protein operates within cofactor biosynthesis; thiamine diphosphate biosynthesis. Catalyzes the rearrangement of 1-deoxy-D-xylulose 5-phosphate (DXP) to produce the thiazole phosphate moiety of thiamine. Sulfur is provided by the thiocarboxylate moiety of the carrier protein ThiS. In vitro, sulfur can be provided by H(2)S. This Variovorax paradoxus (strain S110) protein is Thiazole synthase.